Here is a 258-residue protein sequence, read N- to C-terminus: MLSPCLAVPATECRDPADAPAAPARHTGPARPRKRRPRNWKPHLPRERLLERGPAALTDAELIALLLGTGGGGRDVFASARALLARFGDSLRDMLDAEPDVFATHPGIGTARSAVLIAVTEIARRALVEKARERLQIDSPGAVEDYLRLRIGTRPHEVFVTLYLDARHGLIDVEESARGSLTRMAVYPREIVRRALVLNAAALIIAHNHPSGAVQPSAEDRRLTRVLHEALALIDAKLLDHVVVGTADTFSFARAGWL.

The interval 13–42 (CRDPADAPAAPARHTGPARPRKRRPRNWKP) is disordered. The span at 31–42 (RPRKRRPRNWKP) shows a compositional bias: basic residues. The 123-residue stretch at 136–258 (QIDSPGAVED…TFSFARAGWL (123 aa)) folds into the MPN domain. Zn(2+) is bound by residues histidine 207, histidine 209, and aspartate 220. The JAMM motif motif lies at 207–220 (HNHPSGAVQPSAED).

Belongs to the UPF0758 family.

This is UPF0758 protein BamMC406_2419 from Burkholderia ambifaria (strain MC40-6).